The sequence spans 307 residues: Probable E3 SUMO-protein ligase RNF212 (307 aa).

The RING-type zinc-finger motif lies at 7–46 (CNRCFQSPHRKSSFSLTSCGHVYCHSCLLKGTKNECVICQ). Residues 91–124 (RRRLVAFYQEKISQLEESLRKSVLQIKQLQSMRS) adopt a coiled-coil conformation. Positions 164-291 (LTPPARKPEM…KMSPFLPSTP (128 aa)) are disordered. Polar residues-rich tracts occupy residues 202 to 213 (LSLTPSHASMTK), 233 to 252 (SQLSSRATQGPSPSVSSSWT), and 259 to 271 (ISISGLLQRQCAG).

In terms of tissue distribution, specifically expressed in meiocytes of the gonads.

It is found in the nucleus. It localises to the chromosome. It participates in protein modification; protein sumoylation. Functionally, SUMO E3 ligase that acts as a regulator of crossing-over during meiosis: required to couple chromosome synapsis to the formation of crossover-specific recombination complexes. Localizes to recombination sites and stabilizes meiosis-specific recombination factors, such as MutS-gamma complex proteins (MSH4 and MSH5) and TEX11. May mediate sumoylation of target proteins MSH4 and/or MSH5, leading to enhance their binding to recombination sites. Acts as a limiting factor for crossover designation and/or reinforcement and plays an antagonist role with CCNB1IP1/HEI10 in the regulation of meiotic recombination. This Mus musculus (Mouse) protein is Probable E3 SUMO-protein ligase RNF212 (Rnf212).